A 540-amino-acid polypeptide reads, in one-letter code: MPSSSSGNSRHFSRVAPVVLAILDGWGHREEVEHNSIRSAETPIMDALWHAYPHTLIEASGAAVGLPDNQMGNSEVGHLTIGAGRVIRQELVRISETVQAGRLGQTPALIALAERLRKSDGTLHLLGLCSDGGVHSHINHLCGLLHWAAAAGLNKVAVHLITDGRDTPIQSASKYLHQIEDAINASGVGELASLCGRYWAMDRDHRWERTIRAYEVLTDPNQSISRVTAEDVLSASYANGTTDEFLEPTRLSNNYFKDGDGLVMFNFRPDRARQLVQALTLPDFDGFPRANQPSLDVVTFTQYEHDLPVGVAFPAESLDDLLGQVVSEHGLRQYRTAETEKYPHVTYFMNGGIEQPLAGEERHLVPSPRVATYDLAPAMAADTLTESCVNAIESGVYSLVVINYANPDMVGHTGVMGAAQEAISTVDRCIGRLLDSTGRMGGTLLITADHGNAELMQGSDGQAWTAHTTNPVPVILVEGEKRKLAGYGNDIQLREGGGLADIAPTLLQLLDLPKPDAMSGLSLIQAIDSPTPSARLPQPV.

Asp24 and Ser74 together coordinate Mn(2+). The Phosphoserine intermediate role is filled by Ser74. Substrate-binding positions include His135, 165-166 (RD), Arg197, Arg203, 268-271 (RPDR), and Lys341. Residues Asp408, His412, Asp449, His450, and His467 each coordinate Mn(2+).

The protein belongs to the BPG-independent phosphoglycerate mutase family. In terms of assembly, monomer. The cofactor is Mn(2+).

The enzyme catalyses (2R)-2-phosphoglycerate = (2R)-3-phosphoglycerate. The protein operates within carbohydrate degradation; glycolysis; pyruvate from D-glyceraldehyde 3-phosphate: step 3/5. Catalyzes the interconversion of 2-phosphoglycerate and 3-phosphoglycerate. The sequence is that of 2,3-bisphosphoglycerate-independent phosphoglycerate mutase from Prochlorococcus marinus (strain MIT 9313).